Here is a 644-residue protein sequence, read N- to C-terminus: MAGQLRFTSGKDEDHFQHQGAVELLAFNFLLILTILTIWLFKNHRFRFLHETGGAMVYGLIMGLILRYATAPTDIDSGTVYNCGNLFFSPSTLLVNITDQVYEYKYQREINQHNISPHQGNAILEKMTFDPEIFFNVLLPPIIFHAGYSLKKRHFFQNLGSILTYAFLGTAISCVVIGLIMYGFVKAMVHAGQLKSGDFHFTDCLFFGSLMSATDPVTVLAIFHELHVDPDLYTLLFGESVLNDAVAIVLTYSISIYSPKENPNAFDTAAFFQSVGNFLGIFAGSFAMGSAYAVVTALLTKFTKLREFPMLETGLFFLLSWSAFLSAEAAGLTGIVAVLFCGVTQAHYTYNNLSSDSKLRTKQLFEFMNFLAENVIFCYMGLALFTFQNHIFNALFILGAFLAIFVARACNIYPLSFLLNLGRKQKIPWNFQHMMMFSGLRGAIAFALAIRNTESQPKQMMFTTTLLLVFFTVWVFGGGTTPMLTWLQIRVGVDLDESLKEEPSSQQEANKLDKNMTKTESAQLFRMWYGFDHKYLKPILTHSGPPLTTTLPAWCGPVSRLLTSPQAYGEQLKEDDVECIVNQDELAMNYQEQSPSPSSPTTKLALDQKSSGQTPGKENIYEGDLGLGGYDLKLEQTRGQPQMD.

The Lumenal portion of the chain corresponds to 1–20; that stretch reads MAGQLRFTSGKDEDHFQHQG. A helical transmembrane segment spans residues 21 to 41; sequence AVELLAFNFLLILTILTIWLF. The Cytoplasmic portion of the chain corresponds to 42-45; that stretch reads KNHR. A helical transmembrane segment spans residues 46 to 66; it reads FRFLHETGGAMVYGLIMGLIL. Residues 67–126 lie on the Lumenal side of the membrane; the sequence is RYATAPTDIDSGTVYNCGNLFFSPSTLLVNITDQVYEYKYQREINQHNISPHQGNAILEK. A helical transmembrane segment spans residues 127 to 147; sequence MTFDPEIFFNVLLPPIIFHAG. The Cytoplasmic segment spans residues 148-164; that stretch reads YSLKKRHFFQNLGSILT. A helical membrane pass occupies residues 165–185; sequence YAFLGTAISCVVIGLIMYGFV. The Lumenal segment spans residues 186–203; sequence KAMVHAGQLKSGDFHFTD. The helical transmembrane segment at 204 to 224 threads the bilayer; the sequence is CLFFGSLMSATDPVTVLAIFH. Over 225–235 the chain is Cytoplasmic; that stretch reads ELHVDPDLYTL. Residues 236-256 form a helical membrane-spanning segment; the sequence is LFGESVLNDAVAIVLTYSISI. Residues 257–277 lie on the Lumenal side of the membrane; sequence YSPKENPNAFDTAAFFQSVGN. Residues 278–298 traverse the membrane as a helical segment; it reads FLGIFAGSFAMGSAYAVVTAL. Residues 299-309 lie on the Cytoplasmic side of the membrane; sequence LTKFTKLREFP. A helical membrane pass occupies residues 310–327; it reads MLETGLFFLLSWSAFLSA. At 328 to 333 the chain is on the lumenal side; that stretch reads EAAGLT. A helical membrane pass occupies residues 334-350; it reads GIVAVLFCGVTQAHYTY. The Cytoplasmic portion of the chain corresponds to 351–364; that stretch reads NNLSSDSKLRTKQL. Residues 365–385 traverse the membrane as a helical segment; it reads FEFMNFLAENVIFCYMGLALF. Residue Thr-386 is a topological domain, lumenal. A helical membrane pass occupies residues 387 to 407; sequence FQNHIFNALFILGAFLAIFVA. At 408–429 the chain is on the cytoplasmic side; that stretch reads RACNIYPLSFLLNLGRKQKIPW. Residues 430–450 form a helical membrane-spanning segment; the sequence is NFQHMMMFSGLRGAIAFALAI. Over 451-465 the chain is Lumenal; the sequence is RNTESQPKQMMFTTT. The chain crosses the membrane as a helical span at residues 466 to 486; it reads LLLVFFTVWVFGGGTTPMLTW. Topologically, residues 487 to 644 are cytoplasmic; that stretch reads LQIRVGVDLD…EQTRGQPQMD (158 aa). The tract at residues 590-644 is disordered; sequence YQEQSPSPSSPTTKLALDQKSSGQTPGKENIYEGDLGLGGYDLKLEQTRGQPQMD.

It belongs to the monovalent cation:proton antiporter 1 (CPA1) transporter (TC 2.A.36) family. As to quaternary structure, homodimer; phosphatidylinositol-4,5-bisphosphate (PIP2) and phosphatidylinositol 3,4,5-trisphosphate (PIP3) could be involved in the dimer stabilization. Interacts (via the C-terminus) with RACK1. Interacts with CHP1. Expressed in the brain. Highly expressed in immune cells, specifically macrophages.

It localises to the late endosome membrane. The protein resides in the cell membrane. It is found in the early endosome membrane. Its subcellular location is the recycling endosome membrane. The protein localises to the cytoplasmic vesicle. It localises to the phagosome membrane. It catalyses the reaction Na(+)(in) + H(+)(out) = Na(+)(out) + H(+)(in). It carries out the reaction K(+)(in) + H(+)(out) = K(+)(out) + H(+)(in). Endosomal Na(+), K(+)/H(+) antiporter. Mediates the electroneutral exchange of endosomal luminal H(+) for a cytosolic Na(+) or K(+). By facilitating proton efflux, SLC9A9 counteracts the acidity generated by vacuolar (V)-ATPase, thereby limiting luminal acidification. Regulates organellar pH and consequently, endosome maturation and endocytic trafficking of plasma membrane receptors and neurotransporters. Promotes the recycling of transferrin receptors back to the cell surface to facilitate additional iron uptake in the brain. Regulates synaptic transmission by regulating the luminal pH of axonal endosomes. Regulates phagosome lumenal pH, thus affecting phagosome maturation, and consequently, microbicidal activity in macrophages. Can also be active at the cell surface of specialized cells, e.g., in the inner ear hair bundles uses the high K(+) of the endolymph to regulate intracelular pH. This chain is Sodium/hydrogen exchanger 9 (Slc9a9), found in Mus musculus (Mouse).